We begin with the raw amino-acid sequence, 347 residues long: MKIADNTEHVCVSVKVWLCICSIGILLMVLVGGITRLTHSGLSITEWNPVIGIFPPVSEKEWIAEKMKYMSTPEFKCLNFNITFQEFKKLYLIEYFHRLLGRIVGLIFLLPFLYFTYKKKLNKNLIVNFIIICVLILFQGVMGWLMVKSGLIDRPHVSHYRLTAHLLLALLIFYLLWRQFLSAVILNVTCNLKINNTLIFYVISILIVIQITFGSLVAGLNAGLLHKTVPFLEGRFMLEDLLFMKPLWSNIFDNPITVQFIHEVIAVLILVIVSATLLILRLNFFPSYLLLVCLLIQLTFGILTFIYNVPIALASLHQVTAFILFAINTYLLHCVKLLKLQHVKFVS.

8 helical membrane-spanning segments follow: residues valine 14–isoleucine 34, tyrosine 95–phenylalanine 115, leucine 125–leucine 145, leucine 166–leucine 186, leucine 198–alanine 218, phenylalanine 260–leucine 280, leucine 289–valine 309, and isoleucine 311–leucine 331. Residue histidine 262 coordinates heme. Residue histidine 317 participates in heme binding.

Belongs to the COX15/CtaA family. Type 2 subfamily. In terms of assembly, interacts with CtaB. Heme b serves as cofactor.

It is found in the cell membrane. The enzyme catalyses Fe(II)-heme o + 2 A + H2O = Fe(II)-heme a + 2 AH2. It functions in the pathway porphyrin-containing compound metabolism; heme A biosynthesis; heme A from heme O: step 1/1. Catalyzes the conversion of heme O to heme A by two successive hydroxylations of the methyl group at C8. The first hydroxylation forms heme I, the second hydroxylation results in an unstable dihydroxymethyl group, which spontaneously dehydrates, resulting in the formyl group of heme A. The chain is Heme A synthase from Ehrlichia canis (strain Jake).